The chain runs to 357 residues: 3-isopropylmalate dehydrogenase (357 aa).

Position 76 to 89 (76 to 89 (GPQWDTIDPALRPE)) interacts with NAD(+). R96, R106, R134, and D224 together coordinate substrate. Mg(2+)-binding residues include D224, D248, and D252. 282–294 (GSAPDIAGQGIAN) is an NAD(+) binding site.

Belongs to the isocitrate and isopropylmalate dehydrogenases family. LeuB type 1 subfamily. In terms of assembly, homodimer. The cofactor is Mg(2+). It depends on Mn(2+) as a cofactor.

Its subcellular location is the cytoplasm. It catalyses the reaction (2R,3S)-3-isopropylmalate + NAD(+) = 4-methyl-2-oxopentanoate + CO2 + NADH. Its pathway is amino-acid biosynthesis; L-leucine biosynthesis; L-leucine from 3-methyl-2-oxobutanoate: step 3/4. Catalyzes the oxidation of 3-carboxy-2-hydroxy-4-methylpentanoate (3-isopropylmalate) to 3-carboxy-4-methyl-2-oxopentanoate. The product decarboxylates to 4-methyl-2 oxopentanoate. The sequence is that of 3-isopropylmalate dehydrogenase from Xanthomonas campestris pv. campestris (strain 8004).